The chain runs to 352 residues: Protein NDRG4 (352 aa).

3 positions are modified to phosphoserine: Ser298, Ser317, and Ser323. Low complexity predominate over residues 314 to 323 (RTASLTSASS). The segment at 314–352 (RTASLTSASSVDGSRPQACTHSESSEGLGQVNHTMEVSC) is disordered. Residues 330-352 (QACTHSESSEGLGQVNHTMEVSC) are compositionally biased toward polar residues.

The protein belongs to the NDRG family. In terms of processing, phosphorylated in an aortic smooth muscle cell line, following PDGF treatment. Expressed predominantly in brain and heart (at protein level). In the brain, detected in astrocytes. Isoform 1 and isoform 2 are only expressed in brain. Isoform 3 is expressed in both heart and brain. Up-regulated in glioblastoma multiforme cells.

The protein localises to the cytoplasm. The protein resides in the cytosol. Functionally, contributes to the maintenance of intracerebral BDNF levels within the normal range, which is necessary for the preservation of spatial learning and the resistance to neuronal cell death caused by ischemic stress. May enhance growth factor-induced ERK1 and ERK2 phosphorylation, including that induced by PDGF and FGF. May attenuate NGF-promoted ELK1 phosphorylation in a microtubule-dependent manner. The sequence is that of Protein NDRG4 (NDRG4) from Homo sapiens (Human).